Reading from the N-terminus, the 535-residue chain is Prolyl 4-hydroxylase subunit alpha-2 (535 aa).

Positions 1–21 (MKLWVSALLMAWFGVLSCVQA) are cleaved as a signal peptide. Asn115 carries N-linked (GlcNAc...) asparagine glycosylation. The stretch at 207–240 (SQVLDYLSYAVFQLGDLHRALELTRRLLSLDPSH) is one TPR repeat. The N-linked (GlcNAc...) asparagine glycan is linked to Asn264. A Fe2OG dioxygenase domain is found at 412–520 (TAELLQVANY…KWVSNKWFHE (109 aa)). Residues His430 and Asp432 each contribute to the Fe cation site. The residue at position 480 (Lys480) is an N6-succinyllysine. Fe cation is bound at residue His501. Lys511 is a binding site for 2-oxoglutarate.

Belongs to the P4HA family. As to quaternary structure, heterotetramer of two alpha-2 chains and two beta chains (P4HB) (the beta chain is the multi-functional PDI), where P4HB plays the role of a structural subunit; this tetramer catalyzes the formation of 4-hydroxyproline in collagen. Fe(2+) serves as cofactor. L-ascorbate is required as a cofactor. In terms of tissue distribution, expressed in the heart, placenta, lung and pancreas.

Its subcellular location is the endoplasmic reticulum lumen. The catalysed reaction is L-prolyl-[collagen] + 2-oxoglutarate + O2 = trans-4-hydroxy-L-prolyl-[collagen] + succinate + CO2. Inhibited by poly(L-proline) only at very high concentrations. Its function is as follows. Catalyzes the post-translational formation of 4-hydroxyproline in -Xaa-Pro-Gly- sequences in collagens and other proteins. This Homo sapiens (Human) protein is Prolyl 4-hydroxylase subunit alpha-2 (P4HA2).